We begin with the raw amino-acid sequence, 346 residues long: Glycerol-3-phosphate dehydrogenase [NAD(P)+] (346 aa).

Ser11, Trp12, His32, Arg33, and Lys106 together coordinate NADPH. Sn-glycerol 3-phosphate is bound by residues Lys106, Gly137, and Ser139. Ala141 lines the NADPH pocket. Residues Lys193, Asp246, Ser256, Arg257, and Asn258 each coordinate sn-glycerol 3-phosphate. Lys193 serves as the catalytic Proton acceptor. Arg257 contacts NADPH. Positions 281 and 283 each coordinate NADPH.

It belongs to the NAD-dependent glycerol-3-phosphate dehydrogenase family.

It is found in the cytoplasm. The enzyme catalyses sn-glycerol 3-phosphate + NAD(+) = dihydroxyacetone phosphate + NADH + H(+). It carries out the reaction sn-glycerol 3-phosphate + NADP(+) = dihydroxyacetone phosphate + NADPH + H(+). It participates in membrane lipid metabolism; glycerophospholipid metabolism. In terms of biological role, catalyzes the reduction of the glycolytic intermediate dihydroxyacetone phosphate (DHAP) to sn-glycerol 3-phosphate (G3P), the key precursor for phospholipid synthesis. The polypeptide is Glycerol-3-phosphate dehydrogenase [NAD(P)+] (Bacillus licheniformis (strain ATCC 14580 / DSM 13 / JCM 2505 / CCUG 7422 / NBRC 12200 / NCIMB 9375 / NCTC 10341 / NRRL NRS-1264 / Gibson 46)).